Here is a 398-residue protein sequence, read N- to C-terminus: Argininosuccinate synthase (398 aa).

Residue 8–16 (AYSGGLDTS) participates in ATP binding. An L-citrulline-binding site is contributed by Tyr-87. Gly-117 is a binding site for ATP. L-aspartate contacts are provided by Thr-119, Asn-123, and Asp-124. Asn-123 serves as a coordination point for L-citrulline. L-citrulline is bound by residues Arg-127, Ser-175, Glu-260, and Tyr-272.

The protein belongs to the argininosuccinate synthase family. Type 1 subfamily. In terms of assembly, homotetramer.

It localises to the cytoplasm. The catalysed reaction is L-citrulline + L-aspartate + ATP = 2-(N(omega)-L-arginino)succinate + AMP + diphosphate + H(+). It functions in the pathway amino-acid biosynthesis; L-arginine biosynthesis; L-arginine from L-ornithine and carbamoyl phosphate: step 2/3. The sequence is that of Argininosuccinate synthase from Mycobacterium marinum (strain ATCC BAA-535 / M).